A 1300-amino-acid polypeptide reads, in one-letter code: uncharacterized protein (1300 aa).

The signal sequence occupies residues 1–26 (MGYKLKRWPLVAFTFTGIGLGVVLAA). Cys-27 is lipidated: N-palmitoyl cysteine. Cys-27 carries the S-diacylglycerol cysteine lipid modification. A compositionally biased stretch (low complexity) spans 464 to 478 (AMAAASTGADSSSGT). 4 disordered regions span residues 464–487 (AMAA…SGGN), 620–639 (ASVS…DTQE), 774–797 (DSQK…NDKK), and 1244–1269 (KMSD…SPRT). Composition is skewed to polar residues over residues 620–637 (ASVS…STDT) and 774–783 (DSQKSTNTVK). Positions 785–797 (PDIKPTRENNDKK) are enriched in basic and acidic residues. The segment covering 1257-1269 (TIRKPKPHHSPRT) has biased composition (basic residues).

Belongs to the MG307/MG309/MG338 family.

The protein resides in the cell membrane. This is an uncharacterized protein from Mycoplasma pneumoniae (strain ATCC 29342 / M129 / Subtype 1) (Mycoplasmoides pneumoniae).